Reading from the N-terminus, the 184-residue chain is Photosystem I assembly protein Ycf4 (184 aa).

The next 2 membrane-spanning stretches (helical) occupy residues 19-39 (ISNFCWAFILFLGSLGFLLVG) and 57-77 (IVFFPQGIVMSFYGIAGLFIS).

It belongs to the Ycf4 family.

The protein localises to the plastid. The protein resides in the chloroplast thylakoid membrane. Its function is as follows. Seems to be required for the assembly of the photosystem I complex. This chain is Photosystem I assembly protein Ycf4, found in Atropa belladonna (Belladonna).